The following is a 143-amino-acid chain: Hemoglobin subunit alpha-1 (143 aa).

The residue at position 2 (Ser2) is an N-acetylserine. Residues 2–143 (SLSAKDKATV…LALALCEKYR (142 aa)) enclose the Globin domain. His60 is an O2 binding site. His89 contacts heme b.

It belongs to the globin family. As to quaternary structure, hb 1 is a heterotetramer of two alpha-1 and two beta-1 chains. In terms of tissue distribution, red blood cells.

Functionally, involved in oxygen transport from gills to the various peripheral tissues. In Boreogadus saida (Polar cod), this protein is Hemoglobin subunit alpha-1 (hba1).